A 416-amino-acid chain; its full sequence is cAMP-dependent protein kinase regulatory subunit (416 aa).

The tract at residues 2–183 is dimerization and phosphorylation; that stretch reads VSSLPKESQA…RLEKSIRNNF (182 aa). Ser-3, Ser-4, Ser-9, Ser-68, Ser-70, Ser-74, Ser-77, Ser-79, Ser-81, Ser-83, and Ser-84 each carry phosphoserine. The dimerization/docking domain (D/D) stretch occupies residues 8–45; that stretch reads ESQAELQLFQNEINAANPSDFLQFSANYFNKRLEQQRA. The interval 65–138 is disordered; sequence PEESFSRPQS…TSTPPLPMHF (74 aa). Low complexity predominate over residues 70-84; it reads SRPQSAQSQSRSRSS. Thr-129 bears the Phosphothreonine mark. Phosphoserine is present on Ser-130. Thr-131 and Thr-144 each carry phosphothreonine. Positions 142–146 match the Inhibitor sequence (IS) motif; that stretch reads RRTSV. At Ser-145 the chain carries Phosphoserine; by autocatalysis. Phosphoserine is present on Ser-147. Thr-150 and Thr-160 each carry phosphothreonine. Residues 184–301, Glu-249, Arg-258, 302–416, Glu-368, and Arg-377 each bind 3',5'-cyclic AMP; these read LFNK…KSMP and VLKS…PTRH.

Belongs to the cAMP-dependent kinase regulatory chain family. The inactive holoenzyme of cAMP-dependent protein kinase is a tetramer, composed of 2 regulatory subunits (R, encoded by BCY1) and two catalytic subunits (C, encoded by the 3 partially redundant TPK1, TPK2, and TPK3 genes). Activation by cAMP causes dissociation of the holoenzyme, producing 2 active catalytic monomers C and a regulatory dimer R(2). Post-translationally, phosphorylated by YAK1 in response to glucose starvation. Phosphorylated by MCK1 at Thr-129 upon TOR complex 1 (TORC1) inhibition. Thr-129 phosphorylation activates BCY1 to inhibit PKA. TORC1 inhibits phosphorylation of RxxS/T sites but has no effect on Ser-145 phosphorylation. The phosphorylation sites can be clustered in several groups, all localized in the N-terminal part. The first cluster termed cluster I (CI) is located close to the N-terminus and includes Ser-3, Ser-4 and Ser-9. The second includes Ser-68, Ser-70, Ser-74, Ser-77, Ser-79, Ser-81, Ser-83, and Ser-84. This cluster of phosphorylation sites, termed cluster II (CII), is important for BCY1 cytoplasmic localization and function. The third cluster of phosphorylated residues consists of Thr-144, Ser-145, Ser-147, Thr-150, and Thr-160. This cluster falls within or near the so-called autoinhibitory domain where the catalytic subunit of PKA autophosphorylates the highly conserved Ser-145 to inhibit BCY1. A last cluster of phosphorylated residues included Thr-129, Ser-130, and Thr-131 and is termed cluster III (CIII). Sites in CIII (and to a lesser extent in CII) are hyperphosphorylated in response to rapamycin.

The protein resides in the cytoplasm. It localises to the nucleus. Functionally, regulatory subunit of the cyclic AMP-dependent protein kinase (PKA), an effector of the Ras/cAMP pathway. Inhibits PKA activity in the absence of cAMP. cAMP activates PKA and promotes growth and proliferation in response to good nutrient conditions. Together with ZDS1, provides a negative feedback control on the cell wall integrity-signaling pathway by acting as a negative regulator of MAP kinase SLT2/MPK1. This is cAMP-dependent protein kinase regulatory subunit (BCY1) from Saccharomyces cerevisiae (strain ATCC 204508 / S288c) (Baker's yeast).